The chain runs to 393 residues: Small ribosomal subunit protein bS1 (393 aa).

S1 motif domains are found at residues 16 to 90 (GDKV…LSKR), 108 to 173 (NQTI…LSRK), 194 to 262 (GDVI…LSIK), and 279 to 348 (GDVI…LSIK). Residues 356–369 (VIESDSETTQSYLD) show a composition bias toward polar residues. A disordered region spans residues 356–381 (VIESDSETTQSYLDNGSDDEDNPTLG).

It belongs to the bacterial ribosomal protein bS1 family.

In terms of biological role, binds mRNA; thus facilitating recognition of the initiation point. It is needed to translate mRNA with a short Shine-Dalgarno (SD) purine-rich sequence. The polypeptide is Small ribosomal subunit protein bS1 (rpsA) (Staphylococcus saprophyticus subsp. saprophyticus (strain ATCC 15305 / DSM 20229 / NCIMB 8711 / NCTC 7292 / S-41)).